Reading from the N-terminus, the 367-residue chain is Probable thylakoidal processing peptidase 2, chloroplastic (367 aa).

Residues 1–68 (MAIRVTFTYS…NTWGPSSGPR (68 aa)) constitute a chloroplast transit peptide. The tract at residues 53 to 72 (DKSPGSNTWGPSSGPRARPA) is disordered. The segment covering 62–72 (GPSSGPRARPA) has biased composition (low complexity). The helical transmembrane segment at 185–205 (EDAKAAFTAVTVSLLFRSALA) threads the bilayer. Residues 206–367 (EPKSIPSTSM…VSQKRAVDVS (162 aa)) are Lumenal, thylakoid-facing. Residue serine 214 is part of the active site.

This sequence belongs to the peptidase S26 family.

It localises to the plastid. It is found in the chloroplast thylakoid membrane. It carries out the reaction Cleavage of hydrophobic, N-terminal signal or leader sequences from secreted and periplasmic proteins.. Its function is as follows. Cleaves the thylakoid-transfer domain from a chloroplast protein. This Arabidopsis thaliana (Mouse-ear cress) protein is Probable thylakoidal processing peptidase 2, chloroplastic (TPP2).